Reading from the N-terminus, the 356-residue chain is Phosphoribosyl pyrophosphate synthase-associated protein 1 (356 aa).

Residue Met1 is modified to N-acetylmethionine. Ser177 and Ser215 each carry phosphoserine.

Belongs to the ribose-phosphate pyrophosphokinase family. Binds to PRPS1 and PRPS2.

Functionally, seems to play a negative regulatory role in 5-phosphoribose 1-diphosphate synthesis. The chain is Phosphoribosyl pyrophosphate synthase-associated protein 1 (PRPSAP1) from Bos taurus (Bovine).